A 170-amino-acid chain; its full sequence is ATP synthase subunit b (170 aa).

A helical membrane pass occupies residues 22 to 41 (ILNWAVVVFGLYKFLPGFLG). Positions 76–98 (LSSAAEKASQIKADSLKRSESIR) are disordered. The span at 89–98 (DSLKRSESIR) shows a compositional bias: basic and acidic residues.

It belongs to the ATPase B chain family. F-type ATPases have 2 components, F(1) - the catalytic core - and F(0) - the membrane proton channel. F(1) has five subunits: alpha(3), beta(3), gamma(1), delta(1), epsilon(1). F(0) has four main subunits: a(1), b(1), b'(1) and c(10-14). The alpha and beta chains form an alternating ring which encloses part of the gamma chain. F(1) is attached to F(0) by a central stalk formed by the gamma and epsilon chains, while a peripheral stalk is formed by the delta, b and b' chains.

Its subcellular location is the cellular thylakoid membrane. F(1)F(0) ATP synthase produces ATP from ADP in the presence of a proton or sodium gradient. F-type ATPases consist of two structural domains, F(1) containing the extramembraneous catalytic core and F(0) containing the membrane proton channel, linked together by a central stalk and a peripheral stalk. During catalysis, ATP synthesis in the catalytic domain of F(1) is coupled via a rotary mechanism of the central stalk subunits to proton translocation. Functionally, component of the F(0) channel, it forms part of the peripheral stalk, linking F(1) to F(0). In Prochlorococcus marinus (strain AS9601), this protein is ATP synthase subunit b.